Consider the following 390-residue polypeptide: Fer-related kinase 1 (390 aa).

An SH2 domain is found at 23-119 (YYHGMVPRQD…ASGAKIRRPM (97 aa)). Positions 131–386 (IVANKKLGEG…SIHKKLREFY (256 aa)) constitute a Protein kinase domain. ATP is bound by residues 137-145 (LGEGAFGDV) and K161. The Proton acceptor role is filled by D252.

The protein belongs to the protein kinase superfamily. Tyr protein kinase family. Fes/fps subfamily. As to quaternary structure, interacts with hmp-2. The cofactor is Mn(2+).

The protein resides in the nucleus. It localises to the cytoplasm. It is found in the cell junction. Its subcellular location is the cell membrane. It carries out the reaction L-tyrosyl-[protein] + ATP = O-phospho-L-tyrosyl-[protein] + ADP + H(+). In terms of biological role, non-receptor tyrosine-protein kinase which plays a role in morphogenesis by regulating the epidermal enclosure of the embryo, independently of its kinase activity. Prevents hyperactivation of the Wnt signaling pathway during endoderm development, probably by preventing hmp-2 nuclear translocation. The sequence is that of Fer-related kinase 1 from Caenorhabditis elegans.